A 223-amino-acid chain; its full sequence is Glycosylphosphatidylinositol anchor biosynthesis protein 11 (223 aa).

The next 6 helical transmembrane spans lie at 25–45 (LAVVYGTLLLVYLRFIFSAGI), 52–72 (VMTQALPGLLLLHMGYCVVVL), 88–108 (MIAAALSVFFSVIIFGLLVLF), 120–140 (FVCAMHMSILAVLPLFFTYHL), 158–178 (VYAASVCTLIGAWLGAIPIPY), and 189–209 (ITILAGAYLGYFVGTLGGIAL).

It belongs to the PIGF family.

The protein resides in the endoplasmic reticulum membrane. The protein operates within glycolipid biosynthesis; glycosylphosphatidylinositol-anchor biosynthesis. Functionally, acts in the GPI biosynthetic pathway between GlcNAc-PI synthesis and GPI transfer to protein. The polypeptide is Glycosylphosphatidylinositol anchor biosynthesis protein 11 (GPI11) (Yarrowia lipolytica (strain CLIB 122 / E 150) (Yeast)).